A 382-amino-acid chain; its full sequence is POU domain, class 3, transcription factor 2-A (382 aa).

Disordered stretches follow at residues 69 to 136, 150 to 206, and 348 to 382; these read PWAT…SSNG, GMIN…TPTS, and EKRMTPPGGTIPGAEDIYGASRDTPPHLGVQTSVQ. A compositionally biased stretch (polar residues) spans 122–136; it reads STGSTHLSSMASSNG. Positions 165–178 are enriched in basic and acidic residues; that stretch reads LRDSHDDHHGDHGH. Positions 179–194 are enriched in low complexity; that stretch reads QQVSQAQQQHSQLQGG. In terms of domain architecture, POU-specific spans 201–275; that stretch reads EDTPTSDDLE…LLNKWLEEAD (75 aa). The homeobox DNA-binding region spans 293–352; it reads KRKKRTSIEVSVKGALESHFLKCPKPSAPEITSLADSLQLEKEVVRVWFCNRRQKEKRMT.

Belongs to the POU transcription factor family. Class-3 subfamily. Expressed in the developing brain and spinal cord. Also found in a restricted region of the auditory vesicle during development. In the adult, expression is restricted to the brain.

The protein resides in the nucleus. Its function is as follows. Transcription factor that may be implicated in patterning of the central nervous system during early development. In Xenopus laevis (African clawed frog), this protein is POU domain, class 3, transcription factor 2-A (pou3f2-a).